Consider the following 732-residue polypeptide: Acylamino-acid-releasing enzyme (732 aa).

M1 is subject to N-acetylmethionine. A phosphoserine mark is found at S185 and S187. Catalysis depends on charge relay system residues S587, D675, and H707.

In terms of assembly, homotetramer. In terms of tissue distribution, expressed in erythrocytes (at protein level).

It localises to the cytoplasm. It catalyses the reaction Cleavage of an N-acetyl or N-formyl amino acid from the N-terminus of a polypeptide.. Homotetramerization is required for activity. Tetramerization results in the formation of a gated channel which is involved in substrate selection and substrate access to the catalytic sites. This enzyme catalyzes the hydrolysis of the N-terminal peptide bond of an N-acetylated peptide to generate an N-acetylated amino acid and a peptide with a free N-terminus. It preferentially cleaves off Ac-Ala, Ac-Met and Ac-Ser. Also, involved in the degradation of oxidized and glycated proteins. This chain is Acylamino-acid-releasing enzyme (APEH), found in Homo sapiens (Human).